The chain runs to 134 residues: Nogalonic acid methyl ester cyclase (134 aa).

Gln-95 serves as a coordination point for nogalaviketone. Catalysis depends on Asp-111, which acts as the Proton donor/acceptor.

Belongs to the polyketide cyclase DnrD family. In terms of assembly, homotetramer. Dimer of dimers.

It catalyses the reaction nogalaviketone = methyl nogalonate. The protein operates within antibiotic biosynthesis. Its function is as follows. Involved in the biosynthesis of the aromatic polyketide antibiotic nogalamycin. Catalyzes the formation of nogalaviketone from nogalonic acid methyl ester (NAME), the last ring-closure step in the biosynthesis of nogalamycin. In Streptomyces nogalater, this protein is Nogalonic acid methyl ester cyclase.